Consider the following 269-residue polypeptide: 2-dehydro-3-deoxyphosphooctonate aldolase (269 aa).

Belongs to the KdsA family.

Its subcellular location is the cytoplasm. The enzyme catalyses D-arabinose 5-phosphate + phosphoenolpyruvate + H2O = 3-deoxy-alpha-D-manno-2-octulosonate-8-phosphate + phosphate. It participates in carbohydrate biosynthesis; 3-deoxy-D-manno-octulosonate biosynthesis; 3-deoxy-D-manno-octulosonate from D-ribulose 5-phosphate: step 2/3. It functions in the pathway bacterial outer membrane biogenesis; lipopolysaccharide biosynthesis. The chain is 2-dehydro-3-deoxyphosphooctonate aldolase from Chlamydia felis (strain Fe/C-56) (Chlamydophila felis).